The following is a 340-amino-acid chain: Photosystem II protein D1 (340 aa).

Helical transmembrane passes span 25–42, 114–129, and 138–152; these read YIGW…LATV, HFFL…EWEF, and WIFV…AAAA. H114 lines the chlorophyll a pocket. W122 is a pheophytin a binding site. D166 and E185 together coordinate [CaMn4O5] cluster. A helical membrane pass occupies residues 193–214; sequence FHILGVAGVFGGSLFSAMHGSL. H194 is a chlorophyll a binding site. Residues H211 and 260–261 each bind a quinone; that span reads SF. H211 contacts Fe cation. Residue H268 coordinates Fe cation. A helical transmembrane segment spans residues 270-284; that stretch reads FLAAWPVIGIWITSL. [CaMn4O5] cluster-binding residues include H328, E329, D338, and A340.

Belongs to the reaction center PufL/M/PsbA/D family. In terms of assembly, PSII is composed of 1 copy each of membrane proteins PsbA, PsbB, PsbC, PsbD, PsbE, PsbF, PsbH, PsbI, PsbJ, PsbK, PsbL, PsbM, PsbT, PsbX, PsbY, PsbZ, Psb30/Ycf12, at least 3 peripheral proteins of the oxygen-evolving complex and a large number of cofactors. It forms dimeric complexes. The cofactor is The D1/D2 heterodimer binds P680, chlorophylls that are the primary electron donor of PSII, and subsequent electron acceptors. It shares a non-heme iron and each subunit binds pheophytin, quinone, additional chlorophylls, carotenoids and lipids. D1 provides most of the ligands for the Mn4-Ca-O5 cluster of the oxygen-evolving complex (OEC). There is also a Cl(-1) ion associated with D1 and D2, which is required for oxygen evolution. The PSII complex binds additional chlorophylls, carotenoids and specific lipids.. In terms of processing, tyr-157 forms a radical intermediate that is referred to as redox-active TyrZ, YZ or Y-Z.

It localises to the plastid. The protein localises to the chloroplast thylakoid membrane. It catalyses the reaction 2 a plastoquinone + 4 hnu + 2 H2O = 2 a plastoquinol + O2. Photosystem II (PSII) is a light-driven water:plastoquinone oxidoreductase that uses light energy to abstract electrons from H(2)O, generating O(2) and a proton gradient subsequently used for ATP formation. It consists of a core antenna complex that captures photons, and an electron transfer chain that converts photonic excitation into a charge separation. The D1/D2 (PsbA/PsbD) reaction center heterodimer binds P680, the primary electron donor of PSII as well as several subsequent electron acceptors. This is Photosystem II protein D1 from Amphidinium carterae (Dinoflagellate).